The primary structure comprises 242 residues: uncharacterized protein (242 aa).

Belongs to the MtxX family.

This is an uncharacterized protein from Methanothermobacter thermautotrophicus (strain ATCC 29096 / DSM 1053 / JCM 10044 / NBRC 100330 / Delta H) (Methanobacterium thermoautotrophicum).